The following is a 134-amino-acid chain: Large ribosomal subunit protein bL20 (134 aa).

This sequence belongs to the bacterial ribosomal protein bL20 family.

In terms of biological role, binds directly to 23S ribosomal RNA and is necessary for the in vitro assembly process of the 50S ribosomal subunit. It is not involved in the protein synthesizing functions of that subunit. This chain is Large ribosomal subunit protein bL20, found in Rhizobium leguminosarum bv. trifolii (strain WSM2304).